A 96-amino-acid polypeptide reads, in one-letter code: Co-chaperonin GroES (96 aa).

Belongs to the GroES chaperonin family. As to quaternary structure, heptamer of 7 subunits arranged in a ring. Interacts with the chaperonin GroEL.

It is found in the cytoplasm. Together with the chaperonin GroEL, plays an essential role in assisting protein folding. The GroEL-GroES system forms a nano-cage that allows encapsulation of the non-native substrate proteins and provides a physical environment optimized to promote and accelerate protein folding. GroES binds to the apical surface of the GroEL ring, thereby capping the opening of the GroEL channel. This chain is Co-chaperonin GroES, found in Actinobacillus succinogenes (strain ATCC 55618 / DSM 22257 / CCUG 43843 / 130Z).